Consider the following 450-residue polypeptide: Chromosomal replication initiator protein DnaA (450 aa).

Residues 1–69 (MHDVWRQATE…VGALSVTAGK (69 aa)) are domain I, interacts with DnaA modulators. The segment at 69–113 (KKYFIELVVQEEDQNAEVPQAEDLIIKGHQEIEQPVTSQPETSSS) is domain II. The segment at 114 to 330 (SLNPKYTFEL…GMLIRLGAYS (217 aa)) is domain III, AAA+ region. The ATP site is built by Gly-158, Gly-160, Lys-161, and Ser-162. The segment at 331–450 (SLQGIPITLD…IEDIKLILLK (120 aa)) is domain IV, binds dsDNA.

This sequence belongs to the DnaA family. In terms of assembly, oligomerizes as a right-handed, spiral filament on DNA at oriC.

Its subcellular location is the cytoplasm. Plays an essential role in the initiation and regulation of chromosomal replication. ATP-DnaA binds to the origin of replication (oriC) to initiate formation of the DNA replication initiation complex once per cell cycle. Binds the DnaA box (a 9 base pair repeat at the origin) and separates the double-stranded (ds)DNA. Forms a right-handed helical filament on oriC DNA; dsDNA binds to the exterior of the filament while single-stranded (ss)DNA is stabiized in the filament's interior. The ATP-DnaA-oriC complex binds and stabilizes one strand of the AT-rich DNA unwinding element (DUE), permitting loading of DNA polymerase. After initiation quickly degrades to an ADP-DnaA complex that is not apt for DNA replication. Binds acidic phospholipids. The polypeptide is Chromosomal replication initiator protein DnaA (Pelobacter propionicus (strain DSM 2379 / NBRC 103807 / OttBd1)).